A 353-amino-acid chain; its full sequence is uncharacterized protein (353 aa).

Positions 1 to 30 (MHLRHLFSPRLRGSLLLGSLLVASSFSTLA) are cleaved as a signal peptide.

This is an uncharacterized protein from Salmonella typhi.